A 468-amino-acid chain; its full sequence is Citrate synthase, mitochondrial (468 aa).

The N-terminal 30 residues, 1–30, are a transit peptide targeting the mitochondrion; the sequence is MSLISAGRVCARILGAKNSPCALIAARQAS. Catalysis depends on residues His303 and His349. Arg358 is an oxaloacetate binding site. The active site involves Asp404. The oxaloacetate site is built by Arg430 and Arg450.

The protein belongs to the citrate synthase family. In terms of assembly, homodimer.

It is found in the mitochondrion matrix. The catalysed reaction is oxaloacetate + acetyl-CoA + H2O = citrate + CoA + H(+). The protein operates within carbohydrate metabolism; tricarboxylic acid cycle; isocitrate from oxaloacetate: step 1/2. In terms of biological role, key enzyme of the Krebs tricarboxylic acid cycle which catalyzes the synthesis of citrate from acetyl coenzyme A and oxaloacetate. In Xenopus laevis (African clawed frog), this protein is Citrate synthase, mitochondrial (cs).